The primary structure comprises 161 residues: Nucleotide-binding protein Nmul_A1044 (161 aa).

Belongs to the YajQ family.

Its function is as follows. Nucleotide-binding protein. This Nitrosospira multiformis (strain ATCC 25196 / NCIMB 11849 / C 71) protein is Nucleotide-binding protein Nmul_A1044.